A 120-amino-acid polypeptide reads, in one-letter code: Spermidine export protein MdtJ (120 aa).

The next 4 helical transmembrane spans lie at 1–21 (MFYW…TLSM), 31–51 (AGYI…SFAV), 54–74 (IALG…ITVF), and 81–101 (EVLS…IVLI).

This sequence belongs to the drug/metabolite transporter (DMT) superfamily. Small multidrug resistance (SMR) (TC 2.A.7.1) family. MdtJ subfamily. In terms of assembly, forms a complex with MdtI.

Its subcellular location is the cell inner membrane. Catalyzes the excretion of spermidine. The sequence is that of Spermidine export protein MdtJ from Salmonella arizonae (strain ATCC BAA-731 / CDC346-86 / RSK2980).